A 310-amino-acid chain; its full sequence is Small ribosomal subunit biogenesis GTPase RsgA 2 (310 aa).

One can recognise a CP-type G domain in the interval 77-238; sequence LSKQSHILAA…IIDTPGIKGF (162 aa). Residues 126–129 and 180–188 each bind GTP; these read NKVD and GHSGVGKST. The Zn(2+) site is built by Cys262, Cys267, His269, and Cys275.

The protein belongs to the TRAFAC class YlqF/YawG GTPase family. RsgA subfamily. In terms of assembly, monomer. Associates with 30S ribosomal subunit, binds 16S rRNA. Zn(2+) is required as a cofactor.

Its subcellular location is the cytoplasm. One of several proteins that assist in the late maturation steps of the functional core of the 30S ribosomal subunit. Helps release RbfA from mature subunits. May play a role in the assembly of ribosomal proteins into the subunit. Circularly permuted GTPase that catalyzes slow GTP hydrolysis, GTPase activity is stimulated by the 30S ribosomal subunit. The sequence is that of Small ribosomal subunit biogenesis GTPase RsgA 2 from Bacteroides thetaiotaomicron (strain ATCC 29148 / DSM 2079 / JCM 5827 / CCUG 10774 / NCTC 10582 / VPI-5482 / E50).